A 211-amino-acid chain; its full sequence is FMN-dependent NADH:quinone oxidoreductase (211 aa).

FMN is bound at residue 17 to 19 (SYS).

The protein belongs to the azoreductase type 1 family. As to quaternary structure, homodimer. It depends on FMN as a cofactor.

The catalysed reaction is 2 a quinone + NADH + H(+) = 2 a 1,4-benzosemiquinone + NAD(+). The enzyme catalyses N,N-dimethyl-1,4-phenylenediamine + anthranilate + 2 NAD(+) = 2-(4-dimethylaminophenyl)diazenylbenzoate + 2 NADH + 2 H(+). Quinone reductase that provides resistance to thiol-specific stress caused by electrophilic quinones. In terms of biological role, also exhibits azoreductase activity. Catalyzes the reductive cleavage of the azo bond in aromatic azo compounds to the corresponding amines. The sequence is that of FMN-dependent NADH:quinone oxidoreductase from Bacillus velezensis (strain DSM 23117 / BGSC 10A6 / LMG 26770 / FZB42) (Bacillus amyloliquefaciens subsp. plantarum).